The chain runs to 475 residues: MSDFDEFERQLNENKQERDKENRHRKRSHSRSRSRDRKRRSRSRDRRNRDQRSASRDRRRRSKPLTRGAKEEHGGLIRSPRHEKKKKVRKYWDVPPPGFEHITPMQYKAMQAAGQIPATALLPTMTPDGLAVTPTPVPVVGSQMTRQARRLYVGNIPFGITEEAMMDFFNAQMRLGGLTQAPGNPVLAVQINQDKNFAFLEFRSVDETTQAMAFDGIIFQGQSLKIRRPHDYQPLPGMSENPSVYVPGVVSTVVPDSAHKLFIGGLPNYLNDDQVKELLTSFGPLKAFNLVKDSATGLSKGYAFCEYVDINVTDQAIAGLNGMQLGDKKLLVQRASVGAKNATLVSLPSTINQTPVTLQVPGLMSSQVQMGGHPTEVLCLMNMVLPEELLDDEEYEEIVEDVRDECSKYGLVKSIEIPRPVDGVEVPGCGKIFVEFTSVFDCQKAMQGLTGRKFANRVVVTKYCDPDSYHRRDFW.

The tract at residues 1–90 (MSDFDEFERQ…RHEKKKKVRK (90 aa)) is disordered. Ser2 is modified (N-acetylserine). Ser2 is subject to Phosphoserine. The interval 2–93 (SDFDEFERQL…KKKKVRKYWD (92 aa)) is required for interaction with PRPF19. Positions 7 to 22 (FERQLNENKQERDKEN) are enriched in basic and acidic residues. Lys15 carries the 5-hydroxylysine; by JMJD6; alternate modification. A Glycyl lysine isopeptide (Lys-Gly) (interchain with G-Cter in SUMO2); alternate cross-link involves residue Lys15. The necessary and sufficient to stimulate pre-mRNAs 3'-end cleavage in a CFIm complex-dependent manner stretch occupies residues 17 to 47 (ERDKENRHRKRSHSRSRSRDRKRRSRSRDRR). Basic residues predominate over residues 23-46 (RHRKRSHSRSRSRDRKRRSRSRDR). Residues 47 to 56 (RNRDQRSASR) show a composition bias toward basic and acidic residues. Lys70 participates in a covalent cross-link: Glycyl lysine isopeptide (Lys-Gly) (interchain with G-Cter in SUMO2); alternate. At Lys70 the chain carries N6-acetyllysine; alternate. The residue at position 79 (Ser79) is a Phosphoserine. The span at 79–89 (SPRHEKKKKVR) shows a compositional bias: basic residues. RRM domains lie at 149-231 (RRLY…RPHD), 259-337 (HKLF…RASV), and 385-466 (LPEE…YCDP). Position 276 is a 5-hydroxylysine; by JMJD6 (Lys276). A Phosphoserine modification is found at Ser294.

Belongs to the splicing factor SR family. In terms of assembly, interacts with U2AF1L4. Heterodimer with U2AF1. Binds unphosphorylated SF1. Interacts with SCAF11 and SNW1. Interacts with ZRSR2/U2AF1-RS2. Interacts with RBM17. Interacts with PRPF19; the interaction is direct. Interacts with POLR2A (via the C-terminal domain); Interacts with PRPF19; the interaction is direct. Interacts with POLR2A (via the C-terminal domain); recruits PRPF19 and the Prp19 complex to the pre-mRNA. Interacts with KHDC4 (Isoform 2). Interacts with ZRSR2. Interacts with the SF3B complex composed of SF3B1, SF3B2, SF3B3, SF3B4, SF3B5, SF3B6 and PHF5A. Interacts (via N-terminus) with CPSF7 (via C-terminus); this interaction stimulates pre-mRNA 3'-end processing by promoting the recruitment of the CFIm complex to cleavage and polyadenylation signals. Interacts with ARGLU1; interaction may be involved in ARGLU1-mediated modulation of alternative splicing. In terms of processing, lysyl-hydroxylation at Lys-15 and Lys-276 affects the mRNA splicing activity of the protein, leading to regulate some, but not all, alternative splicing events.

It is found in the nucleus. Plays a role in pre-mRNA splicing and 3'-end processing. By recruiting PRPF19 and the PRP19C/Prp19 complex/NTC/Nineteen complex to the RNA polymerase II C-terminal domain (CTD), and thereby pre-mRNA, may couple transcription to splicing. Required for the export of mRNA out of the nucleus, even if the mRNA is encoded by an intron-less gene. Positively regulates pre-mRNA 3'-end processing by recruiting the CFIm complex to cleavage and polyadenylation signals. This chain is Splicing factor U2AF 65 kDa subunit (U2af2), found in Mus musculus (Mouse).